The sequence spans 319 residues: MKIIFAGTPDFAATALDALIKTPHDIVAVYTQPDRKAGRGQKLTPSPVKQLALEHNLPVLQPLHFKSSTEEGLAAQAELAAFNADVMVVAAYGLILPQIVLDTPKYGCLNIHGSLLPRWRGAAPIQRAIAAGDAETGVTIMKMAAGLDTGDMMFKTYCPIEASDTSASLYEKLAAQGAEAICTVLECEQQLQKFLAEREVQDENQTVYAHKLVKAEAQIDWTQDAIQIDRNIRAFNPWPVAFIPLDDKNNLRVWESTVSKLIAPDAEAGKIIAMDKHGIHVACGTGVVCLTALQWPGGKALNPVQIIQTQKLNIGQVLA.

114–117 serves as a coordination point for (6S)-5,6,7,8-tetrahydrofolate; the sequence is SLLP.

It belongs to the Fmt family.

The enzyme catalyses L-methionyl-tRNA(fMet) + (6R)-10-formyltetrahydrofolate = N-formyl-L-methionyl-tRNA(fMet) + (6S)-5,6,7,8-tetrahydrofolate + H(+). Attaches a formyl group to the free amino group of methionyl-tRNA(fMet). The formyl group appears to play a dual role in the initiator identity of N-formylmethionyl-tRNA by promoting its recognition by IF2 and preventing the misappropriation of this tRNA by the elongation apparatus. The sequence is that of Methionyl-tRNA formyltransferase from Acinetobacter baylyi (strain ATCC 33305 / BD413 / ADP1).